A 149-amino-acid polypeptide reads, in one-letter code: Large ribosomal subunit protein uL11 (149 aa).

It belongs to the universal ribosomal protein uL11 family. Part of the ribosomal stalk of the 50S ribosomal subunit. Interacts with L10 and the large rRNA to form the base of the stalk. L10 forms an elongated spine to which L12 dimers bind in a sequential fashion forming a multimeric L10(L12)X complex. In terms of processing, one or more lysine residues are methylated.

Functionally, forms part of the ribosomal stalk which helps the ribosome interact with GTP-bound translation factors. This chain is Large ribosomal subunit protein uL11, found in Methylobacterium sp. (strain 4-46).